The following is a 225-amino-acid chain: Suppressor of cytokine signaling 3 (225 aa).

The kinase inhibitory region (KIR) stretch occupies residues 22 to 33 (LKTFSSKSEYQL). The segment at 34 to 45 (VVNAVRKLQESG) is extended SH2 subdomain (ESS). The region spanning 46–142 (FYWSAVTGGE…TPSFSLPPTE (97 aa)) is the SH2 domain. The segment at 131–160 (PGTPSFSLPPTEPSSEVPEQPPAQALPGST) is disordered. Residues 177 to 224 (VLSRPLSSNVATLQHLCRKTVNGHLDSYEKVTQLPGPIREFLDQYDAP) enclose the SOCS box domain.

Interacts with multiple activated proteins of the tyrosine kinase signaling pathway including IGF1 receptor, insulin receptor and JAK2. Binding to JAK2 is mediated through the KIR and SH2 domains to a phosphorylated tyrosine residue within the JAK2 JH1 domain. Binds specific activated tyrosine residues of the leptin, EPO, IL12, GSCF and gp130 receptors. Interaction with CSNK1E stabilizes SOCS3 protein. Component of the probable ECS(SOCS3) E3 ubiquitin-protein ligase complex which contains CUL5, RNF7/RBX2, elongin BC complex and SOCS3. Interacts with CUL5, RNF7, ELOB and ELOC. Interacts with FGFR3. Interacts with INSR. Interacts with BCL10; this interaction may interfere with BCL10-binding with PELI2. Interacts with NOD2 (via CARD domain); the interaction promotes NOD2 degradation. In terms of processing, phosphorylated on tyrosine residues after stimulation by the cytokines, IL-2, EPO or IGF1. Low expression in lung, spleen and thymus. Expressed in Th2 but not TH1 cells.

The protein operates within protein modification; protein ubiquitination. Its function is as follows. SOCS family proteins form part of a classical negative feedback system that regulates cytokine signal transduction. SOCS3 is involved in negative regulation of cytokines that signal through the JAK/STAT pathway. Inhibits cytokine signal transduction by binding to tyrosine kinase receptors including IL6ST/gp130, LIF, erythropoietin, insulin, IL12, GCSF and leptin receptors. Binding to JAK2 inhibits its kinase activity and regulates IL6 signaling. Suppresses fetal liver erythropoiesis. Regulates onset and maintenance of allergic responses mediated by T-helper type 2 cells. Probable substrate recognition component of a SCF-like ECS (Elongin BC-CUL2/5-SOCS-box protein) E3 ubiquitin-protein ligase complex which mediates the ubiquitination and subsequent proteasomal degradation of target proteins. The protein is Suppressor of cytokine signaling 3 of Mus musculus (Mouse).